The following is a 194-amino-acid chain: Molybdenum cofactor guanylyltransferase (194 aa).

GTP-binding positions include 12–14, Lys25, Asn53, Asp71, and Asp101; that span reads LAG. Residue Asp101 coordinates Mg(2+).

The protein belongs to the MobA family. Monomer. Requires Mg(2+) as cofactor.

The protein resides in the cytoplasm. It catalyses the reaction Mo-molybdopterin + GTP + H(+) = Mo-molybdopterin guanine dinucleotide + diphosphate. Functionally, transfers a GMP moiety from GTP to Mo-molybdopterin (Mo-MPT) cofactor (Moco or molybdenum cofactor) to form Mo-molybdopterin guanine dinucleotide (Mo-MGD) cofactor. The protein is Molybdenum cofactor guanylyltransferase of Escherichia coli O6:H1 (strain CFT073 / ATCC 700928 / UPEC).